Consider the following 264-residue polypeptide: S-methyl-5'-thioadenosine phosphorylase (264 aa).

Residues S14 and 55–56 contribute to the phosphate site; that span reads RH. Position 180 (M180) interacts with substrate. T181 contacts phosphate. A substrate-binding site is contributed by 204-206; sequence DVD.

The protein belongs to the PNP/MTAP phosphorylase family. MTAP subfamily. In terms of assembly, homodimer.

The catalysed reaction is S-methyl-5'-thioadenosine + phosphate = 5-(methylsulfanyl)-alpha-D-ribose 1-phosphate + adenine. Its pathway is amino-acid biosynthesis; L-methionine biosynthesis via salvage pathway; S-methyl-5-thio-alpha-D-ribose 1-phosphate from S-methyl-5'-thioadenosine (phosphorylase route): step 1/1. Its activity is regulated as follows. Not inhibited by adenosine, potently inhibited by MT-DADMe-immucillin A. In terms of biological role, catalyzes the reversible phosphorylation of S-methyl-5'-thioadenosine (MTA) to adenine and 5-methylthioribose-1-phosphate. Involved in the breakdown of MTA, a major by-product of polyamine biosynthesis. Responsible for the first step in the methionine salvage pathway after MTA has been generated from S-adenosylmethionine. Prefers MTA, with 2% activity on adenosine, 0.8% activity on S-adenosyl-L-homocysteine and no activity on other tested nucleosides. The protein is S-methyl-5'-thioadenosine phosphorylase of Mycobacterium tuberculosis (strain ATCC 25618 / H37Rv).